We begin with the raw amino-acid sequence, 395 residues long: Probable sugar efflux transporter (395 aa).

12 helical membrane-spanning segments follow: residues 13–33, 48–68, 82–102, 107–127, 134–154, 168–188, 207–227, 244–264, 272–292, 297–317, 331–351, and 363–383; these read VVSL…PVAL, VGLI…PCML, IFIL…YWVL, IGVA…VVRL, AQAL…GLPL, FVLI…LLPV, PALL…FTAY, FTTI…MLFS, AGFL…LLPL, WSLS…SLGM, VAMA…ALLG, and IGYM…FTFV.

Belongs to the major facilitator superfamily. SotB (TC 2.A.1.2) family.

The protein localises to the cell inner membrane. Functionally, involved in the efflux of sugars. The physiological role may be the reduction of the intracellular concentration of toxic sugars or sugar metabolites. This is Probable sugar efflux transporter from Pectobacterium atrosepticum (strain SCRI 1043 / ATCC BAA-672) (Erwinia carotovora subsp. atroseptica).